A 225-amino-acid chain; its full sequence is Cytidylate kinase (225 aa).

Position 12–20 (12–20 (GPSGAGKGT)) interacts with ATP.

Belongs to the cytidylate kinase family. Type 1 subfamily.

The protein localises to the cytoplasm. It carries out the reaction CMP + ATP = CDP + ADP. The enzyme catalyses dCMP + ATP = dCDP + ADP. This Stenotrophomonas maltophilia (strain K279a) protein is Cytidylate kinase.